The chain runs to 207 residues: LexA repressor (207 aa).

Residues 33 to 52 (VKEMSETFGISHASVHDRIN) constitute a DNA-binding region (H-T-H motif). Catalysis depends on for autocatalytic cleavage activity residues S129 and K166.

This sequence belongs to the peptidase S24 family. As to quaternary structure, homodimer.

It carries out the reaction Hydrolysis of Ala-|-Gly bond in repressor LexA.. Functionally, represses a number of genes involved in the response to DNA damage (SOS response), including recA and lexA. In the presence of single-stranded DNA, RecA interacts with LexA causing an autocatalytic cleavage which disrupts the DNA-binding part of LexA, leading to derepression of the SOS regulon and eventually DNA repair. The polypeptide is LexA repressor (Oleidesulfovibrio alaskensis (strain ATCC BAA-1058 / DSM 17464 / G20) (Desulfovibrio alaskensis)).